A 141-amino-acid chain; its full sequence is Aspartate 1-decarboxylase (141 aa).

Ser-25 (schiff-base intermediate with substrate; via pyruvic acid) is an active-site residue. Ser-25 carries the post-translational modification Pyruvic acid (Ser). Residue Thr-57 participates in substrate binding. Tyr-58 acts as the Proton donor in catalysis. 73–75 (GAA) lines the substrate pocket. A disordered region spans residues 121–141 (ASAPVPGSRTERSPQAVVAGG).

Belongs to the PanD family. Heterooctamer of four alpha and four beta subunits. Pyruvate is required as a cofactor. Post-translationally, is synthesized initially as an inactive proenzyme, which is activated by self-cleavage at a specific serine bond to produce a beta-subunit with a hydroxyl group at its C-terminus and an alpha-subunit with a pyruvoyl group at its N-terminus.

The protein localises to the cytoplasm. It catalyses the reaction L-aspartate + H(+) = beta-alanine + CO2. The protein operates within cofactor biosynthesis; (R)-pantothenate biosynthesis; beta-alanine from L-aspartate: step 1/1. In terms of biological role, catalyzes the pyruvoyl-dependent decarboxylation of aspartate to produce beta-alanine. This Streptomyces griseus subsp. griseus (strain JCM 4626 / CBS 651.72 / NBRC 13350 / KCC S-0626 / ISP 5235) protein is Aspartate 1-decarboxylase.